We begin with the raw amino-acid sequence, 90 residues long: Putative beta-neurotoxin RjAa14F (90 aa).

Positions 1-18 are cleaved as a signal peptide; that stretch reads MKILIFIIASFMLIGVEC. One can recognise an LCN-type CS-alpha/beta domain in the interval 19–89; it reads KEGYPTNSEG…VWDPNNNKCV (71 aa). 4 disulfide bridges follow: Cys29-Cys88, Cys33-Cys62, Cys40-Cys69, and Cys44-Cys71.

It belongs to the long (4 C-C) scorpion toxin superfamily. Sodium channel inhibitor family. Beta subfamily. As to expression, expressed by the venom gland.

It is found in the secreted. Functionally, beta toxins bind voltage-independently at site-4 of sodium channels (Nav) and shift the voltage of activation toward more negative potentials thereby affecting sodium channel activation and promoting spontaneous and repetitive firing. This is Putative beta-neurotoxin RjAa14F from Rhopalurus junceus (Caribbean blue scorpion).